The chain runs to 2507 residues: Putative neurobeachin homolog (2507 aa).

Disordered regions lie at residues 1 to 109 (MEIS…PPLP), 1307 to 1377 (PSSP…DGGR), and 1629 to 1649 (SRHE…EISE). Residues 24–37 (PVEEGEEVNDEESN) show a composition bias toward acidic residues. Residues 1317-1340 (TTQKQENSENVNSETSPENGSNGK) are compositionally biased toward polar residues. Residues 1360–1372 (DGEEEENGEEGQG) are compositionally biased toward acidic residues. One can recognise a BEACH-type PH domain in the interval 1690 to 1798 (PSSQSACFST…AVKKVVYQLP (109 aa)). Positions 1817 to 2106 (MTPRQLFKHS…QLLTEAHPPR (290 aa)) constitute a BEACH domain. 4 WD repeats span residues 2265-2308 (GHGD…GFIA), 2326-2365 (GHEA…LRRI), 2405-2444 (LVDD…KLYT), and 2447-2486 (PLNS…WHYE).

Belongs to the WD repeat neurobeachin family. In terms of assembly, interacts with RII subunit of PKA. In terms of tissue distribution, expressed in vulval precursor cells and rectal epithelia in L2 and L3 larvae. In L4 larvae, expression is seen in intestinal epithelial cells.

It localises to the cytoplasm. The protein localises to the membrane. It is found in the nucleus. In terms of biological role, binds to type II regulatory subunits of protein kinase A and anchors/targets them to the membrane. May anchor the kinase to cytoskeletal and/or organelle-associated proteins. Regulates endosomal traffic in polarized epithelial cells such as the vulval precursor cells and intestinal cells. Thought to act as a negative regulator of lin-12 activity in vulval precursor cells. May have a role in the internalization process from basolateral surface of polarized epithelial cells. In Caenorhabditis elegans, this protein is Putative neurobeachin homolog (sel-2).